Consider the following 159-residue polypeptide: 6,7-dimethyl-8-ribityllumazine synthase (159 aa).

5-amino-6-(D-ribitylamino)uracil-binding positions include W26, 58 to 60, and 80 to 82; these read AIE and VVI. 85–86 is a binding site for (2S)-2-hydroxy-3-oxobutyl phosphate; that stretch reads ET. The active-site Proton donor is H88. Residue N113 participates in 5-amino-6-(D-ribitylamino)uracil binding. Residue R127 participates in (2S)-2-hydroxy-3-oxobutyl phosphate binding.

Belongs to the DMRL synthase family. Homopentamer.

It carries out the reaction (2S)-2-hydroxy-3-oxobutyl phosphate + 5-amino-6-(D-ribitylamino)uracil = 6,7-dimethyl-8-(1-D-ribityl)lumazine + phosphate + 2 H2O + H(+). Its pathway is cofactor biosynthesis; riboflavin biosynthesis; riboflavin from 2-hydroxy-3-oxobutyl phosphate and 5-amino-6-(D-ribitylamino)uracil: step 1/2. Its function is as follows. Catalyzes the formation of 6,7-dimethyl-8-ribityllumazine by condensation of 5-amino-6-(D-ribitylamino)uracil with 3,4-dihydroxy-2-butanone 4-phosphate. This is the penultimate step in the biosynthesis of riboflavin. The sequence is that of 6,7-dimethyl-8-ribityllumazine synthase from Mycolicibacterium gilvum (strain PYR-GCK) (Mycobacterium gilvum (strain PYR-GCK)).